Reading from the N-terminus, the 507-residue chain is Maturase K (507 aa).

Belongs to the intron maturase 2 family. MatK subfamily.

Its subcellular location is the plastid. The protein localises to the chloroplast. Usually encoded in the trnK tRNA gene intron. Probably assists in splicing its own and other chloroplast group II introns. In Lens ervoides (Beaded lentil), this protein is Maturase K.